The following is a 428-amino-acid chain: CinA-like protein (428 aa).

Belongs to the CinA family.

The polypeptide is CinA-like protein (Endomicrobium trichonymphae).